We begin with the raw amino-acid sequence, 158 residues long: Small ribosomal subunit protein uS7 (158 aa).

Belongs to the universal ribosomal protein uS7 family. In terms of assembly, part of the 30S ribosomal subunit. Contacts proteins S9 and S11.

Functionally, one of the primary rRNA binding proteins, it binds directly to 16S rRNA where it nucleates assembly of the head domain of the 30S subunit. Is located at the subunit interface close to the decoding center, probably blocks exit of the E-site tRNA. The polypeptide is Small ribosomal subunit protein uS7 (Christiangramia forsetii (strain DSM 17595 / CGMCC 1.15422 / KT0803) (Gramella forsetii)).